A 154-amino-acid chain; its full sequence is Prefoldin subunit 2 (154 aa).

2 disordered regions span residues 1–20 (MADS…GKGA) and 126–154 (LMGE…VLVS). Over residues 9 to 18 (GKSGGSGTGK) the composition is skewed to gly residues. A compositionally biased stretch (basic and acidic residues) spans 126 to 139 (LMGEDEKPAAKENS). A compositionally biased stretch (low complexity) spans 141-154 (GAGAKSSSAGVLVS).

This sequence belongs to the prefoldin subunit beta family. Heterohexamer of two PFD-alpha type and four PFD-beta type subunits. Component of the PAQosome complex which is responsible for the biogenesis of several protein complexes and which consists of R2TP complex members RUVBL1, RUVBL2, RPAP3 and PIH1D1, URI complex members PFDN2, PFDN6, PDRG1, UXT and URI1 as well as ASDURF, POLR2E and DNAAF10/WDR92. Interacts with URI1; the interaction is phosphorylation-dependent and occurs in a growth-dependent manner.

Its subcellular location is the nucleus. It localises to the cytoplasm. It is found in the mitochondrion. Functionally, binds specifically to cytosolic chaperonin (c-CPN) and transfers target proteins to it. Binds to nascent polypeptide chain and promotes folding in an environment in which there are many competing pathways for nonnative proteins. This Rattus norvegicus (Rat) protein is Prefoldin subunit 2 (Pfdn2).